Consider the following 549-residue polypeptide: Undecaprenyl phosphate-alpha-4-amino-4-deoxy-L-arabinose arabinosyl transferase (549 aa).

Transmembrane regions (helical) follow at residues 9-29, 80-100, 112-132, 136-156, 176-196, 204-224, 256-276, 288-308, 312-332, 346-366, 376-396, and 402-422; these read LLLIAFGLFYLVPLSNHGLWI, LFGVRIASVVATALSVLLAYL, SLACALLYASFGLIAGQSGYA, PQFTFWVNLSLVALWHALDAG, FLTKGFLAWLLPVLVALPYML, LLGYGALAVLAALLVCLPWAL, PWWFYLPLLAVACLPWSGLLP, QAPVVFLALWLLLPLAFFSLS, LPTYIMPCLLPLALLMGHALV, NGLLNLGLALLALAALAYLQL, FELFLVLLVIGAWAAAGLAQW, and AWAAPLLASWVLIALLPAAMP.

The protein belongs to the glycosyltransferase 83 family.

The protein localises to the cell inner membrane. The enzyme catalyses 4-amino-4-deoxy-alpha-L-arabinopyranosyl di-trans,octa-cis-undecaprenyl phosphate + lipid IVA = lipid IIA + di-trans,octa-cis-undecaprenyl phosphate.. The protein operates within lipopolysaccharide metabolism; 4-amino-4-deoxy-beta-L-arabinose-lipid A biosynthesis. Its function is as follows. Catalyzes the transfer of the L-Ara4N moiety of the glycolipid undecaprenyl phosphate-alpha-L-Ara4N to lipid A. The modified arabinose is attached to lipid A and is required for resistance to polymyxin and cationic antimicrobial peptides. This is Undecaprenyl phosphate-alpha-4-amino-4-deoxy-L-arabinose arabinosyl transferase from Pseudomonas aeruginosa (strain ATCC 15692 / DSM 22644 / CIP 104116 / JCM 14847 / LMG 12228 / 1C / PRS 101 / PAO1).